We begin with the raw amino-acid sequence, 204 residues long: MIILDNSIQTKSKAYSISKLITINTLGPEGTSSEYAAKNFITNFTLLQGVNSKLSLHDTFESCIEKTLQSPLEYTIVPHAYDGIKHFYMRPDLQLLQIFRCDTPMYGLAVRPGFEYTDDMLDKAVIVSHPSPINLIKYFTRKDVTFDLVNSTSAAAKRVKDGLSDIALTNELARQKYGLHFVKTFKSIPMSWSLFGKGEIHDEN.

This sequence belongs to the prephenate decarboxylase family.

The protein localises to the cytoplasm. The catalysed reaction is prephenate + H(+) = 3-[(4R)-4-hydroxycyclohexa-1,5-dien-1-yl]-2-oxopropanoate + CO2. It participates in antibiotic biosynthesis; bacilysin biosynthesis. In terms of biological role, part of the bacABCDEF operon responsible for the biosynthesis of the nonribosomally synthesized dipeptide antibiotic bacilysin, composed of L-alanine and L-anticapsin. Bacilysin is an irreversible inactivator of the glutaminase domain of glucosamine synthetase. BacA is an unusual prephenate decarboxylase that avoids the typical aromatization of the cyclohexadienol ring of prephenate. BacA catalyzes the protonation of prephenate (1-carboxy-4-hydroxy-alpha-oxo-2,5-cyclohexadiene-1-propanoic acid) at C6 position, followed by a decarboxylation to produce the endocyclic-delta(4),delta(8)-7R-dihydro-hydroxyphenylpyruvate (en-H2HPP). En-H2HPP is able to undergo a slow nonenzymatic isomerization to produce the exocyclic-delta(3),delta(5)-dihydro-hydroxyphenylpyruvate (ex-H2HPP). BacA isomerizes only the pro-R double bond in prephenate. The chain is Prephenate decarboxylase from Bacillus subtilis.